A 165-amino-acid chain; its full sequence is Cyclic pyranopterin monophosphate synthase (165 aa).

Residues 79 to 81 (LCH) and 117 to 118 (ME) each bind substrate. Residue Asp-132 is part of the active site.

Belongs to the MoaC family. As to quaternary structure, homohexamer; trimer of dimers.

The enzyme catalyses (8S)-3',8-cyclo-7,8-dihydroguanosine 5'-triphosphate = cyclic pyranopterin phosphate + diphosphate. Its pathway is cofactor biosynthesis; molybdopterin biosynthesis. Catalyzes the conversion of (8S)-3',8-cyclo-7,8-dihydroguanosine 5'-triphosphate to cyclic pyranopterin monophosphate (cPMP). This is Cyclic pyranopterin monophosphate synthase from Chloroflexus aggregans (strain MD-66 / DSM 9485).